The chain runs to 188 residues: Elongation factor P (188 aa).

An N6-(3,6-diaminohexanoyl)-5-hydroxylysine modification is found at lysine 34.

The protein belongs to the elongation factor P family. Post-translationally, may be beta-lysylated on the epsilon-amino group of Lys-34 by the combined action of EpmA and EpmB, and then hydroxylated on the C5 position of the same residue by EpmC (if this protein is present). Lysylation is critical for the stimulatory effect of EF-P on peptide-bond formation. The lysylation moiety may extend toward the peptidyltransferase center and stabilize the terminal 3-CCA end of the tRNA. Hydroxylation of the C5 position on Lys-34 may allow additional potential stabilizing hydrogen-bond interactions with the P-tRNA.

It localises to the cytoplasm. It functions in the pathway protein biosynthesis; polypeptide chain elongation. Functionally, involved in peptide bond synthesis. Alleviates ribosome stalling that occurs when 3 or more consecutive Pro residues or the sequence PPG is present in a protein, possibly by augmenting the peptidyl transferase activity of the ribosome. Modification of Lys-34 is required for alleviation. In Pasteurella multocida (strain Pm70), this protein is Elongation factor P.